A 182-amino-acid chain; its full sequence is Adenine phosphoribosyltransferase (182 aa).

Residue 133–137 coordinates AMP; the sequence is ATGGS.

The protein belongs to the purine/pyrimidine phosphoribosyltransferase family. As to quaternary structure, homodimer. The cofactor is Mg(2+).

The protein resides in the cytoplasm. It is found in the nucleus. The enzyme catalyses AMP + diphosphate = 5-phospho-alpha-D-ribose 1-diphosphate + adenine. Its pathway is purine metabolism; AMP biosynthesis via salvage pathway; AMP from adenine: step 1/1. Functionally, catalyzes a salvage reaction resulting in the formation of AMP, that is energically less costly than de novo synthesis. The protein is Adenine phosphoribosyltransferase (APT1) of Yarrowia lipolytica (strain CLIB 122 / E 150) (Yeast).